We begin with the raw amino-acid sequence, 24 residues long: FENKVPEKQKLFQEDNGIPVHLKG.

The span at 1–13 shows a compositional bias: basic and acidic residues; sequence FENKVPEKQKLFQ. The segment at 1-24 is disordered; that stretch reads FENKVPEKQKLFQEDNGIPVHLKG. K10 is subject to N6-acetyllysine.

This sequence belongs to the cytochrome c oxidase VIIa family. In terms of assembly, component of the cytochrome c oxidase (complex IV, CIV), a multisubunit enzyme composed of 14 subunits. The complex is composed of a catalytic core of 3 subunits MT-CO1, MT-CO2 and MT-CO3, encoded in the mitochondrial DNA, and 11 supernumerary subunits COX4I, COX5A, COX5B, COX6A, COX6B, COX6C, COX7A, COX7B, COX7C, COX8 and NDUFA4, which are encoded in the nuclear genome. The complex exists as a monomer or a dimer and forms supercomplexes (SCs) in the inner mitochondrial membrane with NADH-ubiquinone oxidoreductase (complex I, CI) and ubiquinol-cytochrome c oxidoreductase (cytochrome b-c1 complex, complex III, CIII), resulting in different assemblies (supercomplex SCI(1)III(2)IV(1) and megacomplex MCI(2)III(2)IV(2)). Interacts with PET100.

It is found in the mitochondrion inner membrane. Its pathway is energy metabolism; oxidative phosphorylation. Its function is as follows. Component of the cytochrome c oxidase, the last enzyme in the mitochondrial electron transport chain which drives oxidative phosphorylation. The respiratory chain contains 3 multisubunit complexes succinate dehydrogenase (complex II, CII), ubiquinol-cytochrome c oxidoreductase (cytochrome b-c1 complex, complex III, CIII) and cytochrome c oxidase (complex IV, CIV), that cooperate to transfer electrons derived from NADH and succinate to molecular oxygen, creating an electrochemical gradient over the inner membrane that drives transmembrane transport and the ATP synthase. Cytochrome c oxidase is the component of the respiratory chain that catalyzes the reduction of oxygen to water. Electrons originating from reduced cytochrome c in the intermembrane space (IMS) are transferred via the dinuclear copper A center (CU(A)) of subunit 2 and heme A of subunit 1 to the active site in subunit 1, a binuclear center (BNC) formed by heme A3 and copper B (CU(B)). The BNC reduces molecular oxygen to 2 water molecules using 4 electrons from cytochrome c in the IMS and 4 protons from the mitochondrial matrix. This chain is Cytochrome c oxidase subunit 7A2, mitochondrial (COX7A2), found in Ovis aries (Sheep).